Consider the following 283-residue polypeptide: NifU-like protein 4, mitochondrial (283 aa).

Residues 1–48 constitute a mitochondrion transit peptide; the sequence is MKGIARLVTSLSRIGGRKVVSGTSTVTSSSSSSLLLSRRSLFISATNL.

This sequence belongs to the NifU family. In terms of tissue distribution, predominantly expressed in roots.

The protein localises to the mitochondrion. Molecular scaffold for [Fe-S] cluster assembly of mitochondrial iron-sulfur proteins. The protein is NifU-like protein 4, mitochondrial (NIFU4) of Arabidopsis thaliana (Mouse-ear cress).